Consider the following 257-residue polypeptide: Matrix protein (257 aa).

A Nuclear export signal motif is present at residues 193 to 205 (VAPYAGLTLVINI).

It belongs to the pneumovirinae M protein family. Forms dimers. Forms higher-order oligomers. Interacts with glycoprotein G (via N-terminus). Interacts with protein M2-1; this interaction directs the matrix protein localization to cytoplasmic inclusions comprising viral proteins L, N, P, and M2-1 and mediates the matrix protein association with the nucleocapsid.

Its subcellular location is the virion. The protein resides in the host cytoplasm. It localises to the host nucleus. It is found in the host cell membrane. Plays a crucial role in virus assembly into filaments and budding. Early in infection, localizes in the nucleus where it may inhibit host cell transcription. Later in infection, traffics to the cytoplasm to associate with inclusion bodies, the site of viral transcription and replication. During virus assembly and budding, acts as a bridge between the nucleocapsid and the lipid bilayer. The sequence is that of Matrix protein (M) from Murine pneumonia virus (strain 15) (MPV).